Consider the following 207-residue polypeptide: Small ribosomal subunit protein uS4 (207 aa).

Positions 31–55 (KCKLDSKPGQHGRTSGARTSDYGTQ) are disordered. Residues 42–53 (GRTSGARTSDYG) are compositionally biased toward polar residues. The region spanning 97-160 (SRLDNVVYRM…KKQARIIEAL (64 aa)) is the S4 RNA-binding domain.

This sequence belongs to the universal ribosomal protein uS4 family. In terms of assembly, part of the 30S ribosomal subunit. Contacts protein S5. The interaction surface between S4 and S5 is involved in control of translational fidelity.

Its function is as follows. One of the primary rRNA binding proteins, it binds directly to 16S rRNA where it nucleates assembly of the body of the 30S subunit. Functionally, with S5 and S12 plays an important role in translational accuracy. The polypeptide is Small ribosomal subunit protein uS4 (Burkholderia multivorans (strain ATCC 17616 / 249)).